Here is a 476-residue protein sequence, read N- to C-terminus: Bifunctional protein HldE (476 aa).

Positions 1-318 (MKLDLTVLEQ…YTALHGDKLA (318 aa)) are ribokinase. 195–198 (NLGE) contributes to the ATP binding site. Asp264 is a catalytic residue. Positions 344 to 476 (MTNGCFDILH…MIDTILDREG (133 aa)) are cytidylyltransferase.

This sequence in the N-terminal section; belongs to the carbohydrate kinase PfkB family. The protein in the C-terminal section; belongs to the cytidylyltransferase family. In terms of assembly, homodimer.

It catalyses the reaction D-glycero-beta-D-manno-heptose 7-phosphate + ATP = D-glycero-beta-D-manno-heptose 1,7-bisphosphate + ADP + H(+). The enzyme catalyses D-glycero-beta-D-manno-heptose 1-phosphate + ATP + H(+) = ADP-D-glycero-beta-D-manno-heptose + diphosphate. It participates in nucleotide-sugar biosynthesis; ADP-L-glycero-beta-D-manno-heptose biosynthesis; ADP-L-glycero-beta-D-manno-heptose from D-glycero-beta-D-manno-heptose 7-phosphate: step 1/4. It functions in the pathway nucleotide-sugar biosynthesis; ADP-L-glycero-beta-D-manno-heptose biosynthesis; ADP-L-glycero-beta-D-manno-heptose from D-glycero-beta-D-manno-heptose 7-phosphate: step 3/4. Its function is as follows. Catalyzes the phosphorylation of D-glycero-D-manno-heptose 7-phosphate at the C-1 position to selectively form D-glycero-beta-D-manno-heptose-1,7-bisphosphate. In terms of biological role, catalyzes the ADP transfer from ATP to D-glycero-beta-D-manno-heptose 1-phosphate, yielding ADP-D-glycero-beta-D-manno-heptose. The protein is Bifunctional protein HldE of Chromohalobacter salexigens (strain ATCC BAA-138 / DSM 3043 / CIP 106854 / NCIMB 13768 / 1H11).